A 191-amino-acid polypeptide reads, in one-letter code: Calcium-activated potassium channel subunit beta-1 (191 aa).

Residues 1–18 (MGKKLVMAQKRGETRALC) are Cytoplasmic-facing. Residues 19–39 (LGVAMVVCAAITYYILGTTVL) form a helical membrane-spanning segment. At 40 to 155 (PLYQKSVWTQ…VVYQRLYGPQ (116 aa)) the chain is on the extracellular side. Residues asparagine 80 and asparagine 142 are each glycosylated (N-linked (GlcNAc...) asparagine). Residues 156-176 (ILLFSFFWPTFLLTGGLLIIA) form a helical membrane-spanning segment. Residues 177–191 (MVKLNRSLSVLAAQK) lie on the Cytoplasmic side of the membrane.

It belongs to the KCNMB (TC 8.A.14.1) family. KCNMB1 subfamily. Interacts with KCNMA1 tetramer. There are probably 4 molecules of KCMNB1 per KCNMA1 tetramer. Post-translationally, N-glycosylated. In terms of tissue distribution, weakly expressed. In brain, it is expressed in a few discrete populations of neurons that also express KCNMA1.

Its subcellular location is the membrane. Regulatory subunit of the calcium activated potassium KCNMA1 (maxiK) channel. Modulates the calcium sensitivity and gating kinetics of KCNMA1, thereby contributing to KCNMA1 channel diversity. Increases the apparent Ca(2+)/voltage sensitivity of the KCNMA1 channel. It also modifies KCNMA1 channel kinetics and alters its pharmacological properties. It slows down the activation and the deactivation kinetics of the channel. Acts as a negative regulator of smooth muscle contraction by enhancing the calcium sensitivity to KCNMA1. Its presence is also a requirement for internal binding of the KCNMA1 channel opener dehydrosoyasaponin I (DHS-1) triterpene glycoside and for external binding of the agonist hormone 17-beta-estradiol (E2). Increases the binding activity of charybdotoxin (CTX) toxin to KCNMA1 peptide blocker by increasing the CTX association rate and decreasing the dissociation rate. This chain is Calcium-activated potassium channel subunit beta-1 (Kcnmb1), found in Rattus norvegicus (Rat).